The chain runs to 1231 residues: Cohesin subunit SA-2 (1231 aa).

Met1 bears the N-acetylmethionine mark. Positions 1–75 (MIAAPEIPTD…GSNRMNGHHQ (75 aa)) are disordered. Basic residues predominate over residues 36 to 48 (KQGKGKTCKKGKK). The SCD domain occupies 293-378 (FVHRYRDAIA…SRFKDRIVSM (86 aa)). The residue at position 607 (Lys607) is an N6-acetyllysine. Ser1058, Ser1061, Ser1064, and Ser1065 each carry phosphoserine. Residues 1062-1087 (GMSSRGSTVRSKKSKPSTGKRKVVEG) form a disordered region. Residues 1071 to 1082 (RSKKSKPSTGKR) are compositionally biased toward basic residues. Position 1112 is a phosphothreonine (Thr1112). Ser1177 and Ser1178 each carry phosphoserine.

This sequence belongs to the SCC3 family. As to quaternary structure, interacts directly with RAD21 in cohesin complex. Cohesin complexes are composed of a heterodimer between a SMC1 protein (SMC1A or SMC1B) and SMC3, which are attached via their hinge domain, and RAD21 which link them at their heads, and one STAG protein (STAG1, STAG2 or STAG3). In cohesin complexes, STAG2 is mutually exclusive with STAG1 and STAG3. Post-translationally, phosphorylated by PLK1. The large dissociation of cohesin from chromosome arms during prophase is partly due to its phosphorylation.

It is found in the nucleus. The protein resides in the chromosome. The protein localises to the centromere. Functionally, component of cohesin complex, a complex required for the cohesion of sister chromatids after DNA replication. The cohesin complex apparently forms a large proteinaceous ring within which sister chromatids can be trapped. At anaphase, the complex is cleaved and dissociates from chromatin, allowing sister chromatids to segregate. The cohesin complex may also play a role in spindle pole assembly during mitosis. This chain is Cohesin subunit SA-2 (Stag2), found in Mus musculus (Mouse).